The primary structure comprises 400 residues: CinA-like protein (400 aa).

It belongs to the CinA family.

This chain is CinA-like protein, found in Escherichia coli (strain 55989 / EAEC).